Reading from the N-terminus, the 497-residue chain is Probable cytosol aminopeptidase (497 aa).

Residues K263 and D268 each coordinate Mn(2+). Residue K275 is part of the active site. Mn(2+) is bound by residues D286, D345, and E347. R349 is a catalytic residue.

This sequence belongs to the peptidase M17 family. The cofactor is Mn(2+).

It is found in the cytoplasm. The catalysed reaction is Release of an N-terminal amino acid, Xaa-|-Yaa-, in which Xaa is preferably Leu, but may be other amino acids including Pro although not Arg or Lys, and Yaa may be Pro. Amino acid amides and methyl esters are also readily hydrolyzed, but rates on arylamides are exceedingly low.. It carries out the reaction Release of an N-terminal amino acid, preferentially leucine, but not glutamic or aspartic acids.. Presumably involved in the processing and regular turnover of intracellular proteins. Catalyzes the removal of unsubstituted N-terminal amino acids from various peptides. The protein is Probable cytosol aminopeptidase of Allorhizobium ampelinum (strain ATCC BAA-846 / DSM 112012 / S4) (Agrobacterium vitis (strain S4)).